A 567-amino-acid polypeptide reads, in one-letter code: TGF-beta receptor type-2 (567 aa).

Positions 1 to 22 are cleaved as a signal peptide; that stretch reads MGRGLLRGLWPLHIVLWTRIAS. Over 23-166 the chain is Extracellular; sequence TIPPHVQKSV…NPDLLLVIFQ (144 aa). 6 disulfide bridges follow: cysteine 51-cysteine 84, cysteine 54-cysteine 71, cysteine 61-cysteine 67, cysteine 77-cysteine 101, cysteine 121-cysteine 136, and cysteine 138-cysteine 143. N-linked (GlcNAc...) asparagine glycosylation is found at asparagine 70 and asparagine 94. Asparagine 154 carries N-linked (GlcNAc...) asparagine glycosylation. The helical transmembrane segment at 167–187 threads the bilayer; it reads VTGISLLPPLGVAISVIIIFY. At 188 to 567 the chain is on the cytoplasmic side; sequence CYRVNRQQKL…PEDGSLNTTK (380 aa). A Protein kinase domain is found at 244–544; the sequence is IELDTLVGKG…AERFSELEHL (301 aa). ATP-binding positions include 250–258 and lysine 277; that span reads VGKGRFAEV. The Proton acceptor role is filled by aspartate 379. Phosphoserine is present on residues serine 409, serine 548, and serine 553. The sufficient for interaction with CLU stretch occupies residues 439–567; that stretch reads VESFKQTDVY…PEDGSLNTTK (129 aa).

Belongs to the protein kinase superfamily. TKL Ser/Thr protein kinase family. TGFB receptor subfamily. Homodimer. Heterohexamer; TGFB1, TGFB2 and TGFB3 homodimeric ligands assemble a functional receptor composed of two TGFBR1 and TGFBR2 heterodimers to form a ligand-receptor heterohexamer. The respective affinity of TGFRB1 and TGFRB2 for the ligands may modulate the kinetics of assembly of the receptor and may explain the different biological activities of TGFB1, TGFB2 and TGFB3. Component of a complex composed of TSC22D1 (via N-terminus), TGFBR1 and TGFBR2; the interaction between TSC22D1 and TGFBR1 is inhibited by SMAD7 and promoted by TGFB1. Interacts with DAXX. Interacts with DYNLT4. Interacts with ZFYVE9; ZFYVE9 recruits SMAD2 and SMAD3 to the TGF-beta receptor. Interacts with and is activated by SCUBE3; this interaction does not affect TGFB1-binding to TGFBR2. Interacts with VPS39; this interaction is independent of the receptor kinase activity and of the presence of TGF-beta. Interacts with CLU. As to quaternary structure, homodimer; disulfide-linked. The cofactor is Mg(2+). Mn(2+) serves as cofactor. Post-translationally, phosphorylated on a Ser/Thr residue in the cytoplasmic domain.

It localises to the cell membrane. Its subcellular location is the membrane raft. The protein resides in the secreted. It carries out the reaction L-threonyl-[receptor-protein] + ATP = O-phospho-L-threonyl-[receptor-protein] + ADP + H(+). It catalyses the reaction L-seryl-[receptor-protein] + ATP = O-phospho-L-seryl-[receptor-protein] + ADP + H(+). Transmembrane serine/threonine kinase forming with the TGF-beta type I serine/threonine kinase receptor, TGFBR1, the non-promiscuous receptor for the TGF-beta cytokines TGFB1, TGFB2 and TGFB3. Transduces the TGFB1, TGFB2 and TGFB3 signal from the cell surface to the cytoplasm and thus regulates a plethora of physiological and pathological processes including cell cycle arrest in epithelial and hematopoietic cells, control of mesenchymal cell proliferation and differentiation, wound healing, extracellular matrix production, immunosuppression and carcinogenesis. The formation of the receptor complex composed of 2 TGFBR1 and 2 TGFBR2 molecules symmetrically bound to the cytokine dimer results in the phosphorylation and activation of TGFBR1 by the constitutively active TGFBR2. Activated TGFBR1 phosphorylates SMAD2 which dissociates from the receptor and interacts with SMAD4. The SMAD2-SMAD4 complex is subsequently translocated to the nucleus where it modulates the transcription of the TGF-beta-regulated genes. This constitutes the canonical SMAD-dependent TGF-beta signaling cascade. Also involved in non-canonical, SMAD-independent TGF-beta signaling pathways. In terms of biological role, has transforming growth factor beta-activated receptor activity. Functionally, binds TGFB1, TGFB2 and TGFB3 in the picomolar affinity range without the participation of additional receptors. Blocks activation of SMAD2 and SMAD3 by TGFB1. This is TGF-beta receptor type-2 (TGFBR2) from Homo sapiens (Human).